The sequence spans 373 residues: tRNA-specific 2-thiouridylase MnmA (373 aa).

ATP contacts are provided by residues A7 to S14 and L33. C101 acts as the Nucleophile in catalysis. C101 and C215 are disulfide-bonded. G125 provides a ligand contact to ATP. Residues K165–Q167 are interaction with tRNA. C215 (cysteine persulfide intermediate) is an active-site residue.

This sequence belongs to the MnmA/TRMU family.

The protein localises to the cytoplasm. The catalysed reaction is S-sulfanyl-L-cysteinyl-[protein] + uridine(34) in tRNA + AH2 + ATP = 2-thiouridine(34) in tRNA + L-cysteinyl-[protein] + A + AMP + diphosphate + H(+). Catalyzes the 2-thiolation of uridine at the wobble position (U34) of tRNA, leading to the formation of s(2)U34. This is tRNA-specific 2-thiouridylase MnmA from Roseiflexus sp. (strain RS-1).